A 91-amino-acid polypeptide reads, in one-letter code: Small ribosomal subunit protein uS19 (91 aa).

The protein belongs to the universal ribosomal protein uS19 family.

Protein S19 forms a complex with S13 that binds strongly to the 16S ribosomal RNA. The protein is Small ribosomal subunit protein uS19 of Metamycoplasma hominis (strain ATCC 23114 / DSM 25592 / NBRC 14850 / NCTC 10111 / PG21) (Mycoplasma hominis).